A 1073-amino-acid polypeptide reads, in one-letter code: MIKASKCNKARALFLVRTSIPRTFIRNATSAIPTTVKLKDLSSLPPLTKSLPTNLPFLMPDTLHNLLRFDSKKEKQPSTDKSNDKDKPSRKEKGKDKEKENEERKDINEDEKYDIKEETDSKPTIDPNNPVSSKSSISSSSGGANNNNNNDDSDGRDDDGSPKDKEFLSPSDAGLHPPFLAIAMKDRPFLPGATRHLHVTDPEVIKCVNHMINSNIKSPYFVLFHVRDTNSEDAALDVIKDRDFVHEVGTLCQIIKTTGSEILVYPHYRVKLVDISTPNSRSERIEMEQDNSQTSYLKKFEVSYAVTQQLKDEPYDEQSITINAWTRRIKELYEKLAPKYEQPENKEEIMNNPSMLADFIASKVHAKPEQIQQILESSNVETKLELSLQLLQVEADADEMRQTALKNIRERTEKAYAQSLIKEYTKELLKAAGIGENSKVHKFDERIKHLKMPEEAMKAYKTEKERLGTQSDMEQNVVERYLDWLTQIPFGVYTKDSFNVKKAREILDRDHYGLKDVKDRILEFISVGKISGNVDGRILCLAGPPGTGKTSIAKSIAEALNRKYTRIAVGGVQDVHDVKGHRRTYVASIPGRIVTALTQAKTSNPLMLIDEIDKLDTTSHGGAARAFLEILDPEQNNSFVDNFIEVKVDLSKVLFVCTANYLGSIPAPLRDRMEIIEVNGYTKNDKIEITKRHLIPAAAKKVGLEEGRVVIPDETILRLIDKYCRESGLRHIKSLINRIFSKASRKIVEELEDTDADPHSREIVEESLVAKENESVISDKAKKDAGSSSIESNDSNTEAKVSTTTENEKKQEQKQKQDEEIKKLDLPADLKIEVKPETLKDFVGPEIYIKDRLYETLNPGVATGLAYNTSGDGDALYIESILTDSISSDLGNAGLHVTGSLKEVMKESASIAYSFAKQFMVRQFPDNRFFEAAHIHVHCPGGAIPKDGPSAGIAFTSSLVSLALNKSLPNDTAMTGEITLTGKVLAIGGLREKSLGAKRAGYTKIIFPKDCEYQLDEIPDEVKEGLTYIPVEWYSEVFEHLFKGISKEEGNSVWKEEFAKLEEKKKSKKTHTV.

The transit peptide at 1-27 (MIKASKCNKARALFLVRTSIPRTFIRN) directs the protein to the mitochondrion. Basic and acidic residues-rich tracts occupy residues 69 to 107 (FDSKKEKQPSTDKSNDKDKPSRKEKGKDKEKENEERKDI) and 113 to 123 (YDIKEETDSKP). Positions 69 to 173 (FDSKKEKQPS…DKEFLSPSDA (105 aa)) are disordered. Residues 132–150 (SSKSSISSSSGGANNNNNN) show a composition bias toward low complexity. Positions 158–167 (DDGSPKDKEF) are enriched in basic and acidic residues. One can recognise a Lon N-terminal domain in the interval 177–395 (PPFLAIAMKD…LSLQLLQVEA (219 aa)). 543-550 (GPPGTGKT) provides a ligand contact to ATP. Residues 775–785 (SVISDKAKKDA) are compositionally biased toward basic and acidic residues. The disordered stretch occupies residues 775–821 (SVISDKAKKDAGSSSIESNDSNTEAKVSTTTENEKKQEQKQKQDEEI). The segment covering 790-805 (IESNDSNTEAKVSTTT) has biased composition (polar residues). Over residues 806–821 (ENEKKQEQKQKQDEEI) the composition is skewed to basic and acidic residues. The region spanning 856 to 1044 (TLNPGVATGL…SEVFEHLFKG (189 aa)) is the Lon proteolytic domain. Catalysis depends on residues serine 950 and lysine 993.

The protein belongs to the peptidase S16 family. As to quaternary structure, homohexamer or homoheptamer. Organized in a ring with a central cavity.

The protein localises to the mitochondrion matrix. The catalysed reaction is Hydrolysis of proteins in presence of ATP.. ATP-dependent serine protease that mediates the selective degradation of misfolded, unassembled or oxidatively damaged polypeptides as well as certain short-lived regulatory proteins in the mitochondrial matrix. May also have a chaperone function in the assembly of inner membrane protein complexes. Participates in the regulation of mitochondrial gene expression and in the maintenance of the integrity of the mitochondrial genome. Binds to mitochondrial DNA in a site-specific manner. The protein is Lon protease homolog, mitochondrial of Candida dubliniensis (strain CD36 / ATCC MYA-646 / CBS 7987 / NCPF 3949 / NRRL Y-17841) (Yeast).